Here is a 252-residue protein sequence, read N- to C-terminus: Adenosylcobinamide-GDP ribazoletransferase (252 aa).

7 helical membrane-spanning segments follow: residues 4-24 (LLLLNLLASIIFYTSIPLPYI), 35-55 (LVPMVGLIIGVILGLLDGGMN), 65-85 (SALVVALWIFITGGLHLDGAM), 102-122 (VMADSATGAFGAMSAIAILLL), 178-198 (LLPGLCLMVAVSSLFWLVNNH), 201-221 (LITVVGLITGSAIASLTAAWF), and 232-252 (TYGAVVEWTEALFLCVLTILT).

It belongs to the CobS family. Mg(2+) serves as cofactor.

It localises to the cell inner membrane. The enzyme catalyses alpha-ribazole + adenosylcob(III)inamide-GDP = adenosylcob(III)alamin + GMP + H(+). It carries out the reaction alpha-ribazole 5'-phosphate + adenosylcob(III)inamide-GDP = adenosylcob(III)alamin 5'-phosphate + GMP + H(+). It functions in the pathway cofactor biosynthesis; adenosylcobalamin biosynthesis; adenosylcobalamin from cob(II)yrinate a,c-diamide: step 7/7. Its function is as follows. Joins adenosylcobinamide-GDP and alpha-ribazole to generate adenosylcobalamin (Ado-cobalamin). Also synthesizes adenosylcobalamin 5'-phosphate from adenosylcobinamide-GDP and alpha-ribazole 5'-phosphate. In Trichormus variabilis (strain ATCC 29413 / PCC 7937) (Anabaena variabilis), this protein is Adenosylcobinamide-GDP ribazoletransferase.